The primary structure comprises 87 residues: Histone H1.C6/H1.C9 (87 aa).

Residues 1 to 87 (MSDAAVPPKK…KKAVKKAPKK (87 aa)) form a disordered region. The segment covering 11 to 87 (ASPKKASPKK…KKAVKKAPKK (77 aa)) has biased composition (basic residues).

The protein localises to the nucleus. It is found in the chromosome. This Trypanosoma cruzi protein is Histone H1.C6/H1.C9.